Here is a 395-residue protein sequence, read N- to C-terminus: Ribosomal RNA large subunit methyltransferase G (395 aa).

This sequence belongs to the methyltransferase superfamily. RlmG family.

The protein resides in the cytoplasm. It carries out the reaction guanosine(1835) in 23S rRNA + S-adenosyl-L-methionine = N(2)-methylguanosine(1835) in 23S rRNA + S-adenosyl-L-homocysteine + H(+). In terms of biological role, specifically methylates the guanine in position 1835 (m2G1835) of 23S rRNA. The chain is Ribosomal RNA large subunit methyltransferase G from Yersinia pseudotuberculosis serotype O:1b (strain IP 31758).